Here is a 461-residue protein sequence, read N- to C-terminus: UDP-N-acetylmuramate--L-alanine ligase (461 aa).

Position 111 to 117 (111 to 117 (GAHGKTT)) interacts with ATP.

Belongs to the MurCDEF family.

It is found in the cytoplasm. The enzyme catalyses UDP-N-acetyl-alpha-D-muramate + L-alanine + ATP = UDP-N-acetyl-alpha-D-muramoyl-L-alanine + ADP + phosphate + H(+). It participates in cell wall biogenesis; peptidoglycan biosynthesis. Functionally, cell wall formation. The polypeptide is UDP-N-acetylmuramate--L-alanine ligase (Pelotomaculum thermopropionicum (strain DSM 13744 / JCM 10971 / SI)).